Here is a 248-residue protein sequence, read N- to C-terminus: mRNA-decapping protein OPG122 (248 aa).

The Nudix hydrolase domain maps to 45–227; that stretch reads HKRVSVSAIL…IAKYALDTAK (183 aa). A Nudix box motif is present at residues 126 to 147; sequence GIPKRGENVPECLSREIKEEVN. E132 is a Mg(2+) binding site. The active-site Nucleophile is E141. E145 contributes to the Mn(2+) binding site. D167 provides a ligand contact to Mg(2+).

It belongs to the Nudix hydrolase family. Mg(2+) serves as cofactor. Mn(2+) is required as a cofactor.

The protein localises to the host mitochondrion. Its function is as follows. Decapping enzyme that remove the protective 5'-cap from both host and viral mRNAs to commit transcripts for decay by the cellular exonuclease XRN1. Preferentially targets spliced mRNAs and since all viral genes are intronless, it preferentially targets host over viral transcripts. Acceleration of the turnover of cellular transcripts promotes the shutoff of host protein synthesis and therefore diminish the magnitude of antiviral response. In Vaccinia virus (strain Copenhagen) (VACV), this protein is mRNA-decapping protein OPG122 (OPG122).